The sequence spans 184 residues: Glutathione-regulated potassium-efflux system ancillary protein KefG (184 aa).

This sequence belongs to the NAD(P)H dehydrogenase (quinone) family. KefG subfamily. As to quaternary structure, interacts with KefB.

The protein localises to the cell inner membrane. It catalyses the reaction a quinone + NADH + H(+) = a quinol + NAD(+). The catalysed reaction is a quinone + NADPH + H(+) = a quinol + NADP(+). In terms of biological role, regulatory subunit of a potassium efflux system that confers protection against electrophiles. Required for full activity of KefB. In Yersinia enterocolitica serotype O:8 / biotype 1B (strain NCTC 13174 / 8081), this protein is Glutathione-regulated potassium-efflux system ancillary protein KefG.